Here is a 162-residue protein sequence, read N- to C-terminus: Zinc finger protein ZAT12 (162 aa).

2 C2H2-type zinc fingers span residues 39-61 (FTCKTCLKQFHSFQALGGHRASH) and 82-104 (HPCPICGVEFPMGQALGGHMRRH).

As to expression, expressed in roots, stems and flowers.

Its subcellular location is the nucleus. Transcriptional repressor involved in light acclimation, cold and oxidative stress responses. May regulate a collection of transcripts involved in response to high-light, cold and oxidative stress. This Arabidopsis thaliana (Mouse-ear cress) protein is Zinc finger protein ZAT12 (ZAT12).